The sequence spans 350 residues: Bifunctional methylenetetrahydrofolate dehydrogenase/cyclohydrolase, mitochondrial (350 aa).

The N-terminal 35 residues, Met1–Asn35, are a transit peptide targeting the mitochondrion. N6-acetyllysine; alternate is present on Lys50. Lys50 participates in a covalent cross-link: Glycyl lysine isopeptide (Lys-Gly) (interchain with G-Cter in SUMO2); alternate. Residues Tyr84–Lys88 and Val131–Leu133 each bind substrate. NAD(+) contacts are provided by residues Gly200–Ser202 and Arg233. Pro309–Gly313 is a substrate binding site.

This sequence belongs to the tetrahydrofolate dehydrogenase/cyclohydrolase family. Homodimer. The cofactor is Mg(2+).

It is found in the mitochondrion. It carries out the reaction (6R)-5,10-methylene-5,6,7,8-tetrahydrofolate + NAD(+) = (6R)-5,10-methenyltetrahydrofolate + NADH. It catalyses the reaction (6R)-5,10-methenyltetrahydrofolate + H2O = (6R)-10-formyltetrahydrofolate + H(+). Functionally, although its dehydrogenase activity is NAD-specific, it can also utilize NADP at a reduced efficiency. This Mus musculus (Mouse) protein is Bifunctional methylenetetrahydrofolate dehydrogenase/cyclohydrolase, mitochondrial (Mthfd2).